Reading from the N-terminus, the 527-residue chain is Catalase (527 aa).

A2 carries the N-acetylalanine modification. S9 carries the post-translational modification Phosphoserine. The residue at position 13 (K13) is an N6-succinyllysine. Catalysis depends on residues H75 and N148. NADP(+) is bound by residues H194, S201, R203, and N213. K221 carries the post-translational modification N6-succinyllysine. Residue K233 is modified to N6-acetyllysine. NADP(+) is bound by residues K237, W303, H305, and K306. Residue K306 is modified to N6-acetyllysine; alternate. Residue K306 is modified to N6-succinyllysine; alternate. Heme is bound at residue Y358. S417 and S422 each carry phosphoserine. Residue K480 is modified to N6-acetyllysine; alternate. K480 is modified (N6-succinyllysine; alternate). At K499 the chain carries N6-acetyllysine. At T511 the chain carries Phosphothreonine. 2 positions are modified to phosphoserine: S515 and S517. The Microbody targeting signal; atypical signature appears at 524 to 527 (KANL).

The protein belongs to the catalase family. In terms of assembly, homotetramer. Interacts (via microbody targeting signal) with PEX5, monomeric form interacts with PEX5, leading to its translocation into peroxisomes. Requires heme as cofactor. NADP(+) serves as cofactor.

It localises to the peroxisome matrix. The enzyme catalyses 2 H2O2 = O2 + 2 H2O. Functionally, catalyzes the degradation of hydrogen peroxide (H(2)O(2)) generated by peroxisomal oxidases to water and oxygen, thereby protecting cells from the toxic effects of hydrogen peroxide. Promotes growth of cells including T-cells, B-cells, myeloid leukemia cells, melanoma cells, mastocytoma cells and normal and transformed fibroblast cells. This chain is Catalase (CAT), found in Pongo abelii (Sumatran orangutan).